The following is a 708-amino-acid chain: UvrABC system protein B (708 aa).

In terms of domain architecture, Helicase ATP-binding spans Glu-32–Arg-419. Position 45–52 (Gly-45–Thr-52) interacts with ATP. Residues Tyr-98–Ile-121 carry the Beta-hairpin motif. The Helicase C-terminal domain occupies Gln-436–Ile-598. The 36-residue stretch at Ile-627–His-662 folds into the UVR domain. Positions Ser-668–Gly-708 are disordered. Basic residues predominate over residues Gly-683–Gly-708.

This sequence belongs to the UvrB family. Forms a heterotetramer with UvrA during the search for lesions. Interacts with UvrC in an incision complex.

It localises to the cytoplasm. In terms of biological role, the UvrABC repair system catalyzes the recognition and processing of DNA lesions. A damage recognition complex composed of 2 UvrA and 2 UvrB subunits scans DNA for abnormalities. Upon binding of the UvrA(2)B(2) complex to a putative damaged site, the DNA wraps around one UvrB monomer. DNA wrap is dependent on ATP binding by UvrB and probably causes local melting of the DNA helix, facilitating insertion of UvrB beta-hairpin between the DNA strands. Then UvrB probes one DNA strand for the presence of a lesion. If a lesion is found the UvrA subunits dissociate and the UvrB-DNA preincision complex is formed. This complex is subsequently bound by UvrC and the second UvrB is released. If no lesion is found, the DNA wraps around the other UvrB subunit that will check the other stand for damage. The sequence is that of UvrABC system protein B from Rhodopirellula baltica (strain DSM 10527 / NCIMB 13988 / SH1).